A 100-amino-acid chain; its full sequence is Urease subunit gamma (100 aa).

The protein belongs to the urease gamma subunit family. Heterotrimer of UreA (gamma), UreB (beta) and UreC (alpha) subunits. Three heterotrimers associate to form the active enzyme.

The protein localises to the cytoplasm. The enzyme catalyses urea + 2 H2O + H(+) = hydrogencarbonate + 2 NH4(+). It functions in the pathway nitrogen metabolism; urea degradation; CO(2) and NH(3) from urea (urease route): step 1/1. This is Urease subunit gamma from Escherichia coli O157:H7 (strain EC4115 / EHEC).